The following is a 445-amino-acid chain: Lipid A 1-phosphatase (445 aa).

Positions 1-22 (MNRESFLLLLVLLFALPLHLQA) are cleaved as a signal peptide.

It localises to the periplasm. It functions in the pathway bacterial outer membrane biogenesis; LPS lipid A biosynthesis. Its function is as follows. Removes the 1-phosphate group from lipid A species. Absence of phosphate groups in lipid A renders the bacteria resistant to host-derived cationic antimicrobial peptides (CAMP) and allowing it to camouflage itself from the host innate immune response. This chain is Lipid A 1-phosphatase, found in Porphyromonas gingivalis (strain ATCC 33277 / DSM 20709 / CIP 103683 / JCM 12257 / NCTC 11834 / 2561).